A 304-amino-acid chain; its full sequence is HTH-type transcriptional regulator BenM (304 aa).

Positions 1-58 constitute an HTH lysR-type domain; that stretch reads MELRHLRYFVAVVEEQSFTKAADKLCIAQPPLSRQIQNLEEELGIQLLERGSRPVKTT. The H-T-H motif DNA-binding region spans 18 to 37; the sequence is FTKAADKLCIAQPPLSRQIQ. Residues Ser99 and Leu104 each contribute to the benzoate site. Cis,cis-muconate is bound at residue Ser99. Thr128 contributes to the cis,cis-muconate binding site. Benzoate-binding residues include Phe144, Arg160, and Asn202. A cis,cis-muconate-binding site is contributed by Phe203. Position 293 (Tyr293) interacts with benzoate.

This sequence belongs to the LysR transcriptional regulatory family. Homotetramer; dimer of dimers. The dimers can also associate to form linear, higher oligomers (in vitro).

Positive regulator of the ben and cat genes for benzoate degradation. BenM is necessary for ben gene expression but not for expression of the cat genes, which can be regulated by CatM. Binds to the inducers cis,cis-muconate and benzoate. The protein is HTH-type transcriptional regulator BenM (benM) of Acinetobacter baylyi (strain ATCC 33305 / BD413 / ADP1).